The primary structure comprises 73 residues: Mu-scoloptoxin(15)-Ssd1a (73 aa).

The signal sequence occupies residues 1–20 (MKFHIIFCLLAALMMTSAFA).

In terms of processing, contains 2 disulfide bonds. Expressed by the venom gland.

It localises to the secreted. In terms of biological role, voltage-gated sodium channel inhibitor. The protein is Mu-scoloptoxin(15)-Ssd1a of Scolopendra dehaani (Thai centipede).